The sequence spans 383 residues: Serine protease 23 (383 aa).

The first 19 residues, methionine 1–glycine 19, serve as a signal peptide directing secretion. Asparagine 93 is a glycosylation site (N-linked (GlcNAc...) asparagine). The disordered stretch occupies residues serine 108–lysine 127. A Phosphoserine; by FAM20C modification is found at serine 109. A disulfide bridge connects residues cysteine 160 and cysteine 176. Histidine 175 (charge relay system) is an active-site residue. Asparagine 207 carries N-linked (GlcNAc...) asparagine glycosylation. Catalysis depends on charge relay system residues aspartate 240 and serine 316.

This sequence belongs to the peptidase S1 family.

It localises to the secreted. The protein is Serine protease 23 (PRSS23) of Macaca mulatta (Rhesus macaque).